Reading from the N-terminus, the 325-residue chain is Tetraacyldisaccharide 4'-kinase (325 aa).

T55–T62 serves as a coordination point for ATP.

The protein belongs to the LpxK family.

It carries out the reaction a lipid A disaccharide + ATP = a lipid IVA + ADP + H(+). Its pathway is glycolipid biosynthesis; lipid IV(A) biosynthesis; lipid IV(A) from (3R)-3-hydroxytetradecanoyl-[acyl-carrier-protein] and UDP-N-acetyl-alpha-D-glucosamine: step 6/6. Transfers the gamma-phosphate of ATP to the 4'-position of a tetraacyldisaccharide 1-phosphate intermediate (termed DS-1-P) to form tetraacyldisaccharide 1,4'-bis-phosphate (lipid IVA). The protein is Tetraacyldisaccharide 4'-kinase of Salmonella enteritidis PT4 (strain P125109).